Reading from the N-terminus, the 819-residue chain is Meiotically up-regulated gene 45 protein (819 aa).

The chain crosses the membrane as a helical span at residues 797 to 817 (AMCLLTLLIGIYLILQVVFIY).

Its subcellular location is the membrane. In terms of biological role, has a role in meiosis. The polypeptide is Meiotically up-regulated gene 45 protein (mug45) (Schizosaccharomyces pombe (strain 972 / ATCC 24843) (Fission yeast)).